We begin with the raw amino-acid sequence, 335 residues long: DNA-directed RNA polymerase subunit alpha (335 aa).

The tract at residues 1–233 is alpha N-terminal domain (alpha-NTD); that stretch reads MQRNWRELIK…DQLTIFINFE (233 aa). The tract at residues 249 to 335 is alpha C-terminal domain (alpha-CTD); that stretch reads FNDHLFRSVD…DIENRRKEQE (87 aa).

Belongs to the RNA polymerase alpha chain family. Homodimer. The RNAP catalytic core consists of 2 alpha, 1 beta, 1 beta' and 1 omega subunit. When a sigma factor is associated with the core the holoenzyme is formed, which can initiate transcription.

The enzyme catalyses RNA(n) + a ribonucleoside 5'-triphosphate = RNA(n+1) + diphosphate. In terms of biological role, DNA-dependent RNA polymerase catalyzes the transcription of DNA into RNA using the four ribonucleoside triphosphates as substrates. The sequence is that of DNA-directed RNA polymerase subunit alpha from Syntrophobacter fumaroxidans (strain DSM 10017 / MPOB).